Here is a 284-residue protein sequence, read N- to C-terminus: Thymidylate synthase (284 aa).

Arg-34 lines the dUMP pocket. His-64 provides a ligand contact to (6R)-5,10-methylene-5,6,7,8-tetrahydrofolate. 139 to 140 is a dUMP binding site; that stretch reads RR. The active-site Nucleophile is the Cys-159. DUMP-binding positions include 186–189, Asn-197, and 227–229; these read RSAD and HIY. Residue Asp-189 participates in (6R)-5,10-methylene-5,6,7,8-tetrahydrofolate binding. Position 283 (Ala-283) interacts with (6R)-5,10-methylene-5,6,7,8-tetrahydrofolate.

It belongs to the thymidylate synthase family. Bacterial-type ThyA subfamily. In terms of assembly, homodimer.

It is found in the cytoplasm. The catalysed reaction is dUMP + (6R)-5,10-methylene-5,6,7,8-tetrahydrofolate = 7,8-dihydrofolate + dTMP. It participates in pyrimidine metabolism; dTTP biosynthesis. Catalyzes the reductive methylation of 2'-deoxyuridine-5'-monophosphate (dUMP) to 2'-deoxythymidine-5'-monophosphate (dTMP) while utilizing 5,10-methylenetetrahydrofolate (mTHF) as the methyl donor and reductant in the reaction, yielding dihydrofolate (DHF) as a by-product. This enzymatic reaction provides an intracellular de novo source of dTMP, an essential precursor for DNA biosynthesis. The sequence is that of Thymidylate synthase from Polaromonas sp. (strain JS666 / ATCC BAA-500).